The following is a 98-amino-acid chain: Cystatin-B (98 aa).

The Cystatin domain maps to 4–83; that stretch reads GGTSQPVDAD…PCNGETLELS (80 aa). Residues 46-50 carry the Secondary area of contact motif; that stretch reads QCVPG.

This sequence belongs to the cystatin family. As to expression, ubiquitously expressed in normal and lipopolysaccharide (LPS)-stimulated tissues including brain, eye, gullet, heart, liver, muscle, stomach, kidney, spleen, pyloric ceca, intestine and gill.

It localises to the cytoplasm. With respect to regulation, greatly decreased inhibitory activity against papain protease by metal ions including ZnSO(4), CuSO(4), HgCl(2) and CoCl(2). Decreased inhibitory activity against papain protease by detergents including Tween 20, SDS and Brij 35. Its function is as follows. Thiol protease inhibitor. Has high papain, bovine cathepsin B and fish cathepsins F and X inhibitory activity and inhibits fish cathepsins L, S and K to a lesser extent in vitro. May be involved in innate immunity. This is Cystatin-B from Paralichthys olivaceus (Bastard halibut).